The following is a 412-amino-acid chain: D-amino acid dehydrogenase 3 (412 aa).

4-18 serves as a coordination point for FAD; the sequence is IVVIGAGIAGVSTAY.

Belongs to the DadA oxidoreductase family. FAD serves as cofactor.

It carries out the reaction a D-alpha-amino acid + A + H2O = a 2-oxocarboxylate + AH2 + NH4(+). In terms of biological role, oxidative deamination of D-amino acids. This is D-amino acid dehydrogenase 3 (dadA3) from Mesorhizobium japonicum (strain LMG 29417 / CECT 9101 / MAFF 303099) (Mesorhizobium loti (strain MAFF 303099)).